The following is a 314-amino-acid chain: Ribonucleoside-diphosphate reductase small subunit (314 aa).

Positions 73, 103, and 106 each coordinate Fe cation. Tyr-110 is an active-site residue. A helical membrane pass occupies residues 160 to 180; sequence VLMILIEGIFFSSSFAAIAYL. 3 residues coordinate Fe cation: Glu-166, Glu-200, and His-203.

The protein belongs to the ribonucleoside diphosphate reductase small chain family. Heterotetramer composed of a homodimer of the large subunit (R1) and a homodimer of the small subunit (R2). Larger multisubunit protein complex are also active, composed of (R1)n(R2)n. Fe cation serves as cofactor.

Its subcellular location is the host membrane. The enzyme catalyses a 2'-deoxyribonucleoside 5'-diphosphate + [thioredoxin]-disulfide + H2O = a ribonucleoside 5'-diphosphate + [thioredoxin]-dithiol. Its function is as follows. Ribonucleoside-diphosphate reductase holoenzyme provides the precursors necessary for viral DNA synthesis. Allows virus growth in non-dividing cells, as well as reactivation from latency in infected hosts. Catalyzes the biosynthesis of deoxyribonucleotides from the corresponding ribonucleotides. The protein is Ribonucleoside-diphosphate reductase small subunit of Bovine herpesvirus 1.1 (strain Cooper) (BoHV-1).